We begin with the raw amino-acid sequence, 718 residues long: Polyribonucleotide nucleotidyltransferase (718 aa).

The Mg(2+) site is built by Asp497 and Asp503. A KH domain is found at 564–623; that stretch reads PRLLTMKIDPEQIGLVIGPGGKTIKGITEQTGSKIDIADDGTVTIAALEAEKAEKAKQII. An S1 motif domain is found at 633–701; that stretch reads GEVYMGRVTR…AKGRLNLTRL (69 aa).

This sequence belongs to the polyribonucleotide nucleotidyltransferase family. It depends on Mg(2+) as a cofactor.

The protein localises to the cytoplasm. The enzyme catalyses RNA(n+1) + phosphate = RNA(n) + a ribonucleoside 5'-diphosphate. In terms of biological role, involved in mRNA degradation. Catalyzes the phosphorolysis of single-stranded polyribonucleotides processively in the 3'- to 5'-direction. This is Polyribonucleotide nucleotidyltransferase from Rippkaea orientalis (strain PCC 8801 / RF-1) (Cyanothece sp. (strain PCC 8801)).